The chain runs to 461 residues: Ribulose bisphosphate carboxylase (461 aa).

Position 112 (asparagine 112) interacts with substrate. Residue lysine 167 is the Proton acceptor of the active site. Position 169 (lysine 169) interacts with substrate. Mg(2+) contacts are provided by lysine 192, aspartate 194, and glutamate 195. Lysine 192 carries the N6-carboxylysine modification. Histidine 288 acts as the Proton acceptor in catalysis. Substrate-binding residues include arginine 289, histidine 322, and serine 369.

The protein belongs to the RuBisCO large chain family. Type II subfamily. Homodimer. The cofactor is Mg(2+).

The catalysed reaction is 2 (2R)-3-phosphoglycerate + 2 H(+) = D-ribulose 1,5-bisphosphate + CO2 + H2O. It catalyses the reaction D-ribulose 1,5-bisphosphate + O2 = 2-phosphoglycolate + (2R)-3-phosphoglycerate + 2 H(+). In terms of biological role, ruBisCO catalyzes two reactions: the carboxylation of D-ribulose 1,5-bisphosphate, the primary event in carbon dioxide fixation, as well as the oxidative fragmentation of the pentose substrate. Both reactions occur simultaneously and in competition at the same active site. This is Ribulose bisphosphate carboxylase from Rhodopseudomonas palustris (strain ATCC BAA-98 / CGA009).